Consider the following 155-residue polypeptide: Ribosomal RNA large subunit methyltransferase H (155 aa).

S-adenosyl-L-methionine is bound by residues L72, G103, and 122-127 (LSALTL).

The protein belongs to the RNA methyltransferase RlmH family. As to quaternary structure, homodimer.

Its subcellular location is the cytoplasm. It carries out the reaction pseudouridine(1915) in 23S rRNA + S-adenosyl-L-methionine = N(3)-methylpseudouridine(1915) in 23S rRNA + S-adenosyl-L-homocysteine + H(+). Specifically methylates the pseudouridine at position 1915 (m3Psi1915) in 23S rRNA. This Enterobacter sp. (strain 638) protein is Ribosomal RNA large subunit methyltransferase H.